The sequence spans 159 residues: Crossover junction endodeoxyribonuclease RuvC (159 aa).

Active-site residues include Asp-7, Glu-67, and Asp-139. The Mg(2+) site is built by Asp-7, Glu-67, and Asp-139.

It belongs to the RuvC family. As to quaternary structure, homodimer which binds Holliday junction (HJ) DNA. The HJ becomes 2-fold symmetrical on binding to RuvC with unstacked arms; it has a different conformation from HJ DNA in complex with RuvA. In the full resolvosome a probable DNA-RuvA(4)-RuvB(12)-RuvC(2) complex forms which resolves the HJ. Mg(2+) is required as a cofactor.

It is found in the cytoplasm. The catalysed reaction is Endonucleolytic cleavage at a junction such as a reciprocal single-stranded crossover between two homologous DNA duplexes (Holliday junction).. The RuvA-RuvB-RuvC complex processes Holliday junction (HJ) DNA during genetic recombination and DNA repair. Endonuclease that resolves HJ intermediates. Cleaves cruciform DNA by making single-stranded nicks across the HJ at symmetrical positions within the homologous arms, yielding a 5'-phosphate and a 3'-hydroxyl group; requires a central core of homology in the junction. The consensus cleavage sequence is 5'-(A/T)TT(C/G)-3'. Cleavage occurs on the 3'-side of the TT dinucleotide at the point of strand exchange. HJ branch migration catalyzed by RuvA-RuvB allows RuvC to scan DNA until it finds its consensus sequence, where it cleaves and resolves the cruciform DNA. The chain is Crossover junction endodeoxyribonuclease RuvC from Thermosynechococcus vestitus (strain NIES-2133 / IAM M-273 / BP-1).